Reading from the N-terminus, the 893-residue chain is DNA gyrase subunit A (893 aa).

A Topo IIA-type catalytic domain is found at 35–501 (LPDVRDGLKP…GLEDLEDEDL (467 aa)). The active-site O-(5'-phospho-DNA)-tyrosine intermediate is the Tyr123. A GyrA-box motif is present at residues 528-534 (QNRGGRG). A disordered region spans residues 810–893 (VNEEDDNEEN…ASDNEEDSDE (84 aa)). Composition is skewed to acidic residues over residues 812–821 (EEDDNEENAD) and 852–862 (DAEMESVESPE). Residues 863 to 879 (NDDRIDIRQDFMDRVNE) are compositionally biased toward basic and acidic residues. Residues 880-893 (DIESASDNEEDSDE) are compositionally biased toward acidic residues.

This sequence belongs to the type II topoisomerase GyrA/ParC subunit family. As to quaternary structure, heterotetramer, composed of two GyrA and two GyrB chains. In the heterotetramer, GyrA contains the active site tyrosine that forms a transient covalent intermediate with DNA, while GyrB binds cofactors and catalyzes ATP hydrolysis.

Its subcellular location is the cytoplasm. The enzyme catalyses ATP-dependent breakage, passage and rejoining of double-stranded DNA.. Functionally, a type II topoisomerase that negatively supercoils closed circular double-stranded (ds) DNA in an ATP-dependent manner to modulate DNA topology and maintain chromosomes in an underwound state. Negative supercoiling favors strand separation, and DNA replication, transcription, recombination and repair, all of which involve strand separation. Also able to catalyze the interconversion of other topological isomers of dsDNA rings, including catenanes and knotted rings. Type II topoisomerases break and join 2 DNA strands simultaneously in an ATP-dependent manner. The chain is DNA gyrase subunit A from Staphylococcus epidermidis (strain ATCC 35984 / DSM 28319 / BCRC 17069 / CCUG 31568 / BM 3577 / RP62A).